Here is a 102-residue protein sequence, read N- to C-terminus: A-type ATP synthase subunit F (102 aa).

The protein belongs to the V-ATPase F subunit family. As to quaternary structure, has multiple subunits with at least A(3), B(3), C, D, E, F, H, I and proteolipid K(x).

The protein localises to the cell membrane. In terms of biological role, component of the A-type ATP synthase that produces ATP from ADP in the presence of a proton gradient across the membrane. The sequence is that of A-type ATP synthase subunit F from Thermococcus kodakarensis (strain ATCC BAA-918 / JCM 12380 / KOD1) (Pyrococcus kodakaraensis (strain KOD1)).